The sequence spans 1011 residues: RAS protein activator like-3 (1011 aa).

The tract at residues 1–38 (MDPPSPSRTSQTQPTATSPLTSYRWHTGGGGEKAAGGF) is disordered. The span at 7 to 22 (SRTSQTQPTATSPLTS) shows a compositional bias: low complexity. Phosphoserine is present on residues Ser-18 and Ser-51. 3 disordered regions span residues 52 to 136 (HQEP…PVWD), 151 to 197 (GGEE…GPNQ), and 209 to 230 (KEKKKARLEPRDGPPSALGSRE). The span at 81–95 (SRLRLSKALWGRHKN) shows a compositional bias: basic residues. Residues 100–117 (PDPEPEQEAPELEPEPEL) are compositionally biased toward acidic residues. Positions 118–131 (EPPTPQIPEAPTPN) are enriched in pro residues. A phosphoserine mark is found at Ser-164, Ser-166, Ser-167, and Ser-170. Positions 179–190 (RDPDRMPGKTEP) are enriched in basic and acidic residues. The region spanning 197-293 (QVHNVRGLLK…WIEDLRRQFQ (97 aa)) is the PH domain. Ser-224, Ser-228, and Ser-231 each carry phosphoserine. Thr-234 bears the Phosphothreonine mark. The 121-residue stretch at 284–404 (WIEDLRRQFQ…APAAGLERWF (121 aa)) folds into the C2 domain. The 209-residue stretch at 474 to 682 (GRAQALVTDL…PAMQCFLDQV (209 aa)) folds into the Ras-GAP domain. Disordered stretches follow at residues 756-885 (QVHS…LGTH) and 987-1011 (LSPRTRGSWSQPQPLKAPCLNGDTT). Residues Ser-787 and Ser-790 each carry the phosphoserine modification. Positions 792–808 (RRSESWARPRPDEERPL) are enriched in basic and acidic residues. 2 stretches are compositionally biased toward polar residues: residues 871 to 882 (QMDQPQDRNQAL) and 987 to 999 (LSPRTRGSWSQPQ). Residues 888–988 (VNKLAELQCE…RDAVQSLQLS (101 aa)) are a coiled coil. Ser-988 is modified (phosphoserine).

As to expression, predominantly expressed in cells of hematopoietic lineages.

The protein resides in the cytoplasm. It localises to the cell cortex. In terms of biological role, functions as a Ras GTPase-activating protein. Plays an important role in the expansion and functions of natural killer T (NKT) cells in the liver by negatively regulating RAS activity and the down-stream ERK signaling pathway. This Homo sapiens (Human) protein is RAS protein activator like-3 (RASAL3).